Reading from the N-terminus, the 72-residue chain is Exodeoxyribonuclease 7 small subunit (72 aa).

Belongs to the XseB family. Heterooligomer composed of large and small subunits.

It is found in the cytoplasm. The catalysed reaction is Exonucleolytic cleavage in either 5'- to 3'- or 3'- to 5'-direction to yield nucleoside 5'-phosphates.. Bidirectionally degrades single-stranded DNA into large acid-insoluble oligonucleotides, which are then degraded further into small acid-soluble oligonucleotides. This Chlamydia muridarum (strain MoPn / Nigg) protein is Exodeoxyribonuclease 7 small subunit.